Here is a 170-residue protein sequence, read N- to C-terminus: Protein SOB FIVE-LIKE 5 (170 aa).

Positions 10–15 (SGWTLY) match the SOFL-A motif. The interval 17 to 78 (DQSVSSPSPS…GPRNISEEDS (62 aa)) is disordered. A compositionally biased stretch (basic and acidic residues) spans 35 to 44 (DSRRRSKDSW). Residues 61–70 (SMISDASSGP) carry the SOFL-B motif. The Nuclear localization signal signature appears at 79-86 (VKKINIVG).

It belongs to the SOFL plant protein family. In terms of tissue distribution, expressed in seedlings, roots, flowers and siliques. Barely detectable in leaves.

It is found in the cytoplasm. The protein localises to the nucleus. Its function is as follows. Involved in cytokinin-mediated development. The sequence is that of Protein SOB FIVE-LIKE 5 from Arabidopsis thaliana (Mouse-ear cress).